The primary structure comprises 381 residues: Cytochrome b (381 aa).

Helical transmembrane passes span 34-54 (FGSL…FLAM), 78-99 (WLIR…YLHI), 114-134 (WNIG…GYVL), and 179-199 (FFAF…IHLL). Residues His84 and His98 each coordinate heme b. Positions 183 and 197 each coordinate heme b. His202 contributes to the a ubiquinone binding site. A run of 4 helical transmembrane segments spans residues 227 to 247 (YKDL…ALFM), 289 to 309 (LGGV…PLLH), 321 to 341 (LTQI…WIGG), and 348 to 368 (FITV…IIMP).

This sequence belongs to the cytochrome b family. In terms of assembly, the cytochrome bc1 complex contains 3 respiratory subunits (MT-CYB, CYC1 and UQCRFS1), 2 core proteins (UQCRC1 and UQCRC2) and probably 6 low-molecular weight proteins. Heme b is required as a cofactor.

Its subcellular location is the mitochondrion inner membrane. In terms of biological role, component of the ubiquinol-cytochrome c reductase complex (complex III or cytochrome b-c1 complex) that is part of the mitochondrial respiratory chain. The b-c1 complex mediates electron transfer from ubiquinol to cytochrome c. Contributes to the generation of a proton gradient across the mitochondrial membrane that is then used for ATP synthesis. The chain is Cytochrome b (mt-cyb) from Sphyrna tiburo vespertina (Pacific bonnethead shark).